The chain runs to 155 residues: Transcription antitermination protein NusB (155 aa).

Belongs to the NusB family.

Functionally, involved in transcription antitermination. Required for transcription of ribosomal RNA (rRNA) genes. Binds specifically to the boxA antiterminator sequence of the ribosomal RNA (rrn) operons. The protein is Transcription antitermination protein NusB of Mesorhizobium japonicum (strain LMG 29417 / CECT 9101 / MAFF 303099) (Mesorhizobium loti (strain MAFF 303099)).